A 267-amino-acid chain; its full sequence is tRNA pseudouridine synthase A (267 aa).

Aspartate 51 (nucleophile) is an active-site residue. Residue tyrosine 109 coordinates substrate.

It belongs to the tRNA pseudouridine synthase TruA family. In terms of assembly, homodimer.

It carries out the reaction uridine(38/39/40) in tRNA = pseudouridine(38/39/40) in tRNA. Formation of pseudouridine at positions 38, 39 and 40 in the anticodon stem and loop of transfer RNAs. The sequence is that of tRNA pseudouridine synthase A from Staphylococcus carnosus (strain TM300).